The following is a 142-amino-acid chain: Gonadotropin subunit beta-2 (142 aa).

An N-terminal signal peptide occupies residues 1–23; the sequence is MLGLHVGTLISLFLCILLEPVEG. 6 disulfides stabilise this stretch: Cys-29/Cys-77, Cys-43/Cys-92, Cys-46/Cys-130, Cys-54/Cys-108, Cys-58/Cys-110, and Cys-113/Cys-120. Asn-33 carries N-linked (GlcNAc...) asparagine glycosylation.

The protein belongs to the glycoprotein hormones subunit beta family. In terms of assembly, heterodimer of an alpha and a beta chain.

It localises to the secreted. Functionally, involved in gametogenesis and steroidogenesis. This is Gonadotropin subunit beta-2 (cgbb) from Oncorhynchus keta (Chum salmon).